The chain runs to 731 residues: 1,4-alpha-glucan branching enzyme GlgB (731 aa).

The Nucleophile role is filled by aspartate 409. Glutamate 462 (proton donor) is an active-site residue.

This sequence belongs to the glycosyl hydrolase 13 family. GlgB subfamily. In terms of assembly, monomer.

It catalyses the reaction Transfers a segment of a (1-&gt;4)-alpha-D-glucan chain to a primary hydroxy group in a similar glucan chain.. The protein operates within glycan biosynthesis; glycogen biosynthesis. Its function is as follows. Catalyzes the formation of the alpha-1,6-glucosidic linkages in glycogen by scission of a 1,4-alpha-linked oligosaccharide from growing alpha-1,4-glucan chains and the subsequent attachment of the oligosaccharide to the alpha-1,6 position. This chain is 1,4-alpha-glucan branching enzyme GlgB (glgB), found in Dickeya chrysanthemi (Pectobacterium chrysanthemi).